Reading from the N-terminus, the 396-residue chain is MATLVLDNGAYNAKIGYSHAHVSVIPNCQFRSKTARLKTFTANQLDEIKDPSGLFYILPFQKGYLVNWDVQRQVWDYLFGKEMYQVDFVDTNIIITEPYFNFSSIQESMNEILFEEYQFQAVLRVNAGALSAHRYFRDNPSELCCIIVDSGYSFTHIVPYCRSKKKKEAIIRINVGGKLLTNHLKEIISYRQLHVMDETHVINQVKEDVCYVSQDFYKDMEIAKLKGEENTVMVDYVLPDFSTIKKGFCKPREEMVLSGKYKTGEQILRLTNERFAVPEILFHPSDIGIQEMGIPEAIVDSIQNLPEEMQPHFFKNIVLTGGNTLFPGFRDRVYSEVRCLTPTDYDVSVVLPENPITYSWEGGKLISENDDFEDLVVTREDYEEHGHNICEEKFDI.

This sequence belongs to the actin family. ARP6 subfamily. As to quaternary structure, interacts with CBX1 and CBX3.

Its subcellular location is the cytoplasm. It is found in the cytoskeleton. The protein resides in the nucleus. It localises to the nucleolus. Its function is as follows. Required for formation and/or maintenance of the proper nucleolar structure and function. Plays a dual role in the regulation of ribosomal DNA (rDNA) transcription. In the presence of high glucose, it maintains active rDNA transcription through H2A.Z deposition and under glucose starvation, is required for the repression of rDNA transcription, and this function may be independent of H2A.Z. This chain is Actin-related protein 6 (ACTR6), found in Gallus gallus (Chicken).